The following is a 247-amino-acid chain: tRNA pseudouridine synthase A (247 aa).

The active-site Nucleophile is the Asp-52. Tyr-111 lines the substrate pocket.

The protein belongs to the tRNA pseudouridine synthase TruA family. As to quaternary structure, homodimer.

The catalysed reaction is uridine(38/39/40) in tRNA = pseudouridine(38/39/40) in tRNA. Its function is as follows. Formation of pseudouridine at positions 38, 39 and 40 in the anticodon stem and loop of transfer RNAs. The protein is tRNA pseudouridine synthase A of Caulobacter vibrioides (strain ATCC 19089 / CIP 103742 / CB 15) (Caulobacter crescentus).